The primary structure comprises 328 residues: MKLLVLGTGGTIASAKTEMGYKAALSADDILQLAGIRREDGAKIETRDILNLDSTLIQPEDWVTIGRAVFEAFDEYDGIVITHGTDTLAYTSSALSFMIRNPPIPVVLTGSMLPITEPNSDAPRNLRTALTFARKGFPGIYVAFMDKIMLGTRVSKVHSLGLNAFQSINYPDIAYVKGDEVLVRHKPRIGNGEPLFDPELDPNVVHIRLTPGLSPEVLRAVARATDGIVLEGYGAGGIPYRGRNLLEVVSETAREKPVVMTTQALYGGVDLTRYEVGRRALEAGVIPAGDMTKEATLTKLMWALGHTRDLEEIRKIMERNIAGEITGS.

The 320-residue stretch at M1–N320 folds into the Asparaginase/glutaminase domain. T11 functions as the Nucleophile; O-isoaspartyl threonine intermediate in the catalytic mechanism. L-aspartate contacts are provided by T11, D53, S54, T85, and D86. Residues T85, D86, K156, and Y274 each act as charge relay system in the active site.

It belongs to the asparaginase 1 family. In terms of assembly, homodimer.

The catalysed reaction is L-asparagine + H2O = L-aspartate + NH4(+). Chohan et al. found that divalent metal ions and EDTA do not have any significant effect on enzyme activity, indicating that activity is independent of metal ions. In another study, Hong et al. showed that activity is enhanced by Mg(2+), significantly inhibited by Co(2+) and Ni(2+), and moderately inhibited by Ca(2+), Cu(2+) and EDTA. Unfolding studies suggest that urea cannot induce complete unfolding and inactivation of the enzyme even at a concentration 8 M. However, in the presence of 4 M guanidine hydrochloride, the enzyme structure is unfolded with complete loss of enzyme activity. Functionally, catalyzes the hydrolysis of L-asparagine into L-aspartate and ammonia. Also displays D-asparaginase activity, which is about 50% of the L-asparaginase activity. Does not exhibit glutaminase activity. This chain is L-asparaginase, found in Thermococcus kodakarensis (strain ATCC BAA-918 / JCM 12380 / KOD1) (Pyrococcus kodakaraensis (strain KOD1)).